The primary structure comprises 109 residues: uncharacterized protein (109 aa).

The next 2 helical transmembrane spans lie at 24 to 44 and 68 to 88; these read SLGILMGGSTSCMVGMNSAFV and VIVLFNTLVFRSPLFLFSIFI.

It is found in the membrane. This is an uncharacterized protein from Saccharomyces cerevisiae (strain ATCC 204508 / S288c) (Baker's yeast).